The chain runs to 617 residues: Leucine aminopeptidase 2 (617 aa).

Residues Gln139–Gln141 and Pro271–Glu276 each bind a peptide. Residue His300 participates in Zn(2+) binding. Glu301 serves as the catalytic Proton acceptor. His304 and Glu323 together coordinate Zn(2+). Residue Tyr388 is the Proton donor of the active site.

Belongs to the peptidase M1 family. Zn(2+) serves as cofactor.

It localises to the cytoplasm. The protein localises to the nucleus. It carries out the reaction an epoxide + H2O = an ethanediol. Functionally, aminopeptidase that preferentially cleaves di- and tripeptides. Also has low epoxide hydrolase activity (in vitro). Can hydrolyze the epoxide leukotriene LTA(4) but it forms preferentially 5,6-dihydroxy-7,9,11,14-eicosatetraenoic acid rather than the cytokine leukotriene B(4) as the product compared to the homologous mammalian enzyme (in vitro). The chain is Leucine aminopeptidase 2 from Neosartorya fischeri (strain ATCC 1020 / DSM 3700 / CBS 544.65 / FGSC A1164 / JCM 1740 / NRRL 181 / WB 181) (Aspergillus fischerianus).